We begin with the raw amino-acid sequence, 271 residues long: NAD kinase (271 aa).

Asp52 functions as the Proton acceptor in the catalytic mechanism. NAD(+) contacts are provided by residues 52–53 (DG), 129–130 (NE), Arg155, Asp157, and Ala192.

It belongs to the NAD kinase family. Requires a divalent metal cation as cofactor.

The protein localises to the cytoplasm. It carries out the reaction NAD(+) + ATP = ADP + NADP(+) + H(+). In terms of biological role, involved in the regulation of the intracellular balance of NAD and NADP, and is a key enzyme in the biosynthesis of NADP. Catalyzes specifically the phosphorylation on 2'-hydroxyl of the adenosine moiety of NAD to yield NADP. The sequence is that of NAD kinase from Geobacillus stearothermophilus (Bacillus stearothermophilus).